Consider the following 399-residue polypeptide: Protein DDI1 homolog 2 (399 aa).

One can recognise a Ubiquitin-like domain in the interval 1 to 81; that stretch reads MLLTVYCVRR…VILRQKENAD (81 aa). The interval 99–134 is disordered; it reads IAVPGTSNPQQRQLPRTQAQHSSPGEMASSPQGLDN. Polar residues predominate over residues 103–131; the sequence is GTSNPQQRQLPRTQAQHSSPGEMASSPQG. The residue at position 104 (Thr-104) is a Phosphothreonine. Ser-121, Ser-128, Ser-150, and Ser-194 each carry phosphoserine. Residue Asp-252 is part of the active site. The Ubiquitin-binding signature appears at 376–395; the sequence is EEIADQELAEAIQKSAEDAE.

This sequence belongs to the DDI1 family. Homodimer.

The protein resides in the cytoplasm. The protein localises to the cytosol. It is found in the chromosome. Its function is as follows. Aspartic protease that mediates the cleavage of NFE2L1/NRF1 at 'Leu-104', thereby promoting release of NFE2L1/NRF1 from the endoplasmic reticulum membrane. Ubiquitination of NFE2L1/NRF1 is a prerequisite for cleavage, suggesting that DDI2 specifically recognizes and binds ubiquitinated NFE2L1/NRF1. Seems to act as a proteasomal shuttle which links the proteasome and replication fork proteins like RTF2. Required, with DDI1, for cellular survival following replication stress. Together or redudantly with DDI1, removes RTF2 from stalled forks to allow cell cycle progression after replication stress and maintains genome integrity. The sequence is that of Protein DDI1 homolog 2 from Mus musculus (Mouse).